The sequence spans 463 residues: Hydroxyacid-oxoacid transhydrogenase, mitochondrial (463 aa).

The protein belongs to the iron-containing alcohol dehydrogenase family. Hydroxyacid-oxoacid transhydrogenase subfamily.

It is found in the mitochondrion. It catalyses the reaction (S)-3-hydroxybutanoate + 2-oxoglutarate = (R)-2-hydroxyglutarate + acetoacetate. The catalysed reaction is 4-hydroxybutanoate + 2-oxoglutarate = (R)-2-hydroxyglutarate + succinate semialdehyde. Its function is as follows. Catalyzes the cofactor-independent reversible oxidation of gamma-hydroxybutyrate (GHB) to succinic semialdehyde (SSA) coupled to reduction of 2-ketoglutarate (2-KG) to D-2-hydroxyglutarate (D-2-HG). L-3-hydroxybutyrate (L-3-OHB) is also a substrate for HOT when using 2-KG as hydrogen acceptor, resulting in the formation of D-2-HG. The sequence is that of Hydroxyacid-oxoacid transhydrogenase, mitochondrial (adhfe1) from Xenopus tropicalis (Western clawed frog).